We begin with the raw amino-acid sequence, 184 residues long: Large ribosomal subunit protein uL22B (184 aa).

Residue lysine 46 forms a Glycyl lysine isopeptide (Lys-Gly) (interchain with G-Cter in ubiquitin) linkage. Phosphothreonine is present on threonine 70.

It belongs to the universal ribosomal protein uL22 family. As to quaternary structure, component of the large ribosomal subunit (LSU). Mature yeast ribosomes consist of a small (40S) and a large (60S) subunit. The 40S small subunit contains 1 molecule of ribosomal RNA (18S rRNA) and 33 different proteins (encoded by 57 genes). The large 60S subunit contains 3 rRNA molecules (25S, 5.8S and 5S rRNA) and 46 different proteins (encoded by 81 genes). uL22 is associated with the polypeptide exit tunnel.

The protein resides in the cytoplasm. In terms of biological role, component of the ribosome, a large ribonucleoprotein complex responsible for the synthesis of proteins in the cell. The small ribosomal subunit (SSU) binds messenger RNAs (mRNAs) and translates the encoded message by selecting cognate aminoacyl-transfer RNA (tRNA) molecules. The large subunit (LSU) contains the ribosomal catalytic site termed the peptidyl transferase center (PTC), which catalyzes the formation of peptide bonds, thereby polymerizing the amino acids delivered by tRNAs into a polypeptide chain. The nascent polypeptides leave the ribosome through a tunnel in the LSU and interact with protein factors that function in enzymatic processing, targeting, and the membrane insertion of nascent chains at the exit of the ribosomal tunnel. The sequence is that of Large ribosomal subunit protein uL22B from Saccharomyces cerevisiae (strain ATCC 204508 / S288c) (Baker's yeast).